The following is a 367-amino-acid chain: Cis-3-hydroxy-L-proline dehydratase (367 aa).

The Proton donor/acceptor role is filled by K165. Mg(2+) is bound by residues D193, E218, and D241. The active-site Proton donor/acceptor is the K265.

Belongs to the mandelate racemase/muconate lactonizing enzyme family. The cofactor is Mg(2+).

It catalyses the reaction cis-3-hydroxy-L-proline = 1-pyrroline-2-carboxylate + H2O. Catalyzes the dehydration of cis-3-hydroxy-L-proline (c3LHyp) to Delta(1)-pyrroline-2-carboxylate (Pyr2C). Is likely involved in a degradation pathway that converts c3LHyp to L-proline, which allows L.aggregata to grow on c3LHyp as a sole carbon source. Also catalyzes the epimerization of c3LHyp to trans-3-hydroxy-D-proline (t3DHyp), a competing reaction occurring from the same enolate anion intermediate. L-proline, t3LHyp, t4LHyp, c4DHyp and their methylated derivatives are not substrates. This is Cis-3-hydroxy-L-proline dehydratase from Roseibium aggregatum (strain ATCC 25650 / DSM 13394 / JCM 20685 / NBRC 16684 / NCIMB 2208 / IAM 12614 / B1) (Stappia aggregata).